The sequence spans 122 residues: Large ribosomal subunit protein uL18 (122 aa).

The protein belongs to the universal ribosomal protein uL18 family. As to quaternary structure, part of the 50S ribosomal subunit; part of the 5S rRNA/L5/L18/L25 subcomplex. Contacts the 5S and 23S rRNAs.

Its function is as follows. This is one of the proteins that bind and probably mediate the attachment of the 5S RNA into the large ribosomal subunit, where it forms part of the central protuberance. The chain is Large ribosomal subunit protein uL18 from Syntrophotalea carbinolica (strain DSM 2380 / NBRC 103641 / GraBd1) (Pelobacter carbinolicus).